The sequence spans 469 residues: Glutamate--tRNA ligase 1 (469 aa).

A 'HIGH' region motif is present at residues 10–20; sequence PSPTGYLHIGG. 4 residues coordinate Zn(2+): cysteine 99, cysteine 101, cysteine 126, and aspartate 128. Residues 237 to 241 carry the 'KMSKS' region motif; the sequence is RLSKR. Residue lysine 240 coordinates ATP.

It belongs to the class-I aminoacyl-tRNA synthetase family. Glutamate--tRNA ligase type 1 subfamily. As to quaternary structure, monomer. The cofactor is Zn(2+).

It is found in the cytoplasm. It carries out the reaction tRNA(Glu) + L-glutamate + ATP = L-glutamyl-tRNA(Glu) + AMP + diphosphate. Its function is as follows. Catalyzes the attachment of glutamate to tRNA(Glu) in a two-step reaction: glutamate is first activated by ATP to form Glu-AMP and then transferred to the acceptor end of tRNA(Glu). The chain is Glutamate--tRNA ligase 1 from Coxiella burnetii (strain CbuK_Q154) (Coxiella burnetii (strain Q154)).